A 457-amino-acid chain; its full sequence is Metacaspase-1 (457 aa).

Residues 1–149 (MSWNQYPGGG…PQLQGQGGQS (149 aa)) form a disordered region. Positions 7 to 18 (PGGGHHQQGGYG) are enriched in gly residues. Over residues 20–56 (RPPPPQWAQQGPPPPPNMGYRPPPPPQAYYNNPPPPQ) the composition is skewed to pro residues. Residues 57–83 (QYQRPAPQQNGYQQGGYQQQQQSQGNY) show a composition bias toward low complexity. Active-site residues include His247 and Cys303.

It belongs to the peptidase C14B family.

Its function is as follows. Involved in cell death (apoptosis). The polypeptide is Metacaspase-1 (MCA1) (Cryptococcus neoformans var. neoformans serotype D (strain JEC21 / ATCC MYA-565) (Filobasidiella neoformans)).